Consider the following 254-residue polypeptide: 14-3-3 protein 2 (254 aa).

It belongs to the 14-3-3 family. In terms of assembly, homodimer.

This Solanum lycopersicum (Tomato) protein is 14-3-3 protein 2 (TFT2).